A 546-amino-acid polypeptide reads, in one-letter code: Chaperonin GroEL (546 aa).

Residues Thr-30 to Pro-33, Lys-51, Asp-87 to Thr-91, Gly-415, and Asp-496 each bind ATP. The segment at Pro-526 to Phe-546 is disordered. Over residues Gly-536–Phe-546 the composition is skewed to gly residues.

The protein belongs to the chaperonin (HSP60) family. In terms of assembly, forms a cylinder of 14 subunits composed of two heptameric rings stacked back-to-back. Interacts with the co-chaperonin GroES.

The protein resides in the cytoplasm. The catalysed reaction is ATP + H2O + a folded polypeptide = ADP + phosphate + an unfolded polypeptide.. In terms of biological role, together with its co-chaperonin GroES, plays an essential role in assisting protein folding. The GroEL-GroES system forms a nano-cage that allows encapsulation of the non-native substrate proteins and provides a physical environment optimized to promote and accelerate protein folding. In Zymomonas mobilis subsp. mobilis (strain ATCC 31821 / ZM4 / CP4), this protein is Chaperonin GroEL.